The sequence spans 497 residues: Glutamate--tRNA ligase (497 aa).

Positions 13 to 23 match the 'HIGH' region motif; it reads PSPTGTPHVGM. A 'KMSKS' region motif is present at residues 257 to 261; sequence KLSKR. Lys-260 lines the ATP pocket.

Belongs to the class-I aminoacyl-tRNA synthetase family. Glutamate--tRNA ligase type 1 subfamily. Monomer.

The protein resides in the cytoplasm. The enzyme catalyses tRNA(Glu) + L-glutamate + ATP = L-glutamyl-tRNA(Glu) + AMP + diphosphate. Functionally, catalyzes the attachment of glutamate to tRNA(Glu) in a two-step reaction: glutamate is first activated by ATP to form Glu-AMP and then transferred to the acceptor end of tRNA(Glu). The sequence is that of Glutamate--tRNA ligase from Corynebacterium diphtheriae (strain ATCC 700971 / NCTC 13129 / Biotype gravis).